The following is a 974-amino-acid chain: ATP-dependent RNA helicase glh-2 (974 aa).

The segment at 212–435 is disordered; that stretch reads HESGFGGGKS…SGFGGGNDGG (224 aa). Gly residues predominate over residues 215–250; it reads GFGGGKSGGFGGGNSGGSGFGSGGNSNGFGSGGGGQ. Over residues 256 to 267 the composition is skewed to polar residues; it reads NNNCFNCQQPGH. CCHC-type zinc fingers lie at residues 257–274 and 282–299; these read NNCF…DCPE and RVCY…DCPE. Composition is skewed to basic and acidic residues over residues 268–282 and 293–307; these read RSND…REPR and NSRD…REGR. Residues 309–364 show a composition bias toward gly residues; the sequence is GFTGGSSGFGGGNGGGTGFDSGLTNGFGSGNNGESGFGSGGFGGNSNGFGSGGGGQ. Polar residues predominate over residues 370 to 381; that stretch reads NNNCFNCQQPGH. CCHC-type zinc fingers lie at residues 371 to 388 and 396 to 413; these read NNCF…DCPE and RVCY…DCPE. 2 stretches are compositionally biased toward basic and acidic residues: residues 382–396 and 407–421; these read RSND…REPR and NSRD…REGR. Positions 426-435 are enriched in gly residues; sequence SGFGGGNDGG. CCHC-type zinc fingers lie at residues 453–470 and 473–490; these read MKCF…ECPE and RGCF…ECPN. A Q motif motif is present at residues 552 to 580; the sequence is KTFSEANLGETMKKNVAHAGYTKTTPIQQ. The Helicase ATP-binding domain maps to 583 to 767; it reads LPLIHQGHDI…RNHLKEGYIM (185 aa). 596 to 603 lines the ATP pocket; the sequence is AQTGSGKT. The short motif at 710-713 is the DEAD box element; sequence DEAD. The Helicase C-terminal domain maps to 803–950; the sequence is DIDSYTTEKN…LVPEWMQGAS (148 aa).

Belongs to the DEAD box helicase family. DDX4/VASA subfamily. In terms of assembly, interacts (via C-terminus) with kgb-1.

It catalyses the reaction ATP + H2O = ADP + phosphate + H(+). In terms of biological role, probable ATP-binding RNA helicase. This Caenorhabditis elegans protein is ATP-dependent RNA helicase glh-2 (glh-2).